A 4599-amino-acid chain; its full sequence is Low-density lipoprotein receptor-related protein 1B (4599 aa).

Residues 1 to 20 (MSEFLLALLTLSGLLPIARV) form the signal peptide. Residues 25–4444 (ADRDQQLCDP…KSDHISTRSI (4420 aa)) are Extracellular-facing. LDL-receptor class A domains are found at residues 31–70 (LCDPGEFLCHDHVTCVSQSWLCDGDPDCPDDSDESLDTCP) and 76–114 (KCPLNHIACLGTNKCVHLSQLCNGVLDCPDGYDEGVHCQ). Cystine bridges form between Cys-32–Cys-45, Cys-39–Cys-58, Cys-52–Cys-69, Cys-77–Cys-90, Cys-84–Cys-103, Cys-97–Cys-113, Cys-120–Cys-129, Cys-125–Cys-138, Cys-140–Cys-153, Cys-159–Cys-169, Cys-165–Cys-178, and Cys-180–Cys-193. The EGF-like 1 domain maps to 116-154 (LLSNCQQLNCQYKCTMVRNSTRCYCEDGFEITEDGRSCK). Asn-134 is a glycosylation site (N-linked (GlcNAc...) asparagine). The 40-residue stretch at 155-194 (DQDECAVYGTCSQTCRNTHGSYTCSCVEGYLMQPDNRSCK) folds into the EGF-like 2; calcium-binding domain. N-linked (GlcNAc...) asparagine glycosylation is found at Asn-190, Asn-220, Asn-313, and Asn-360. LDL-receptor class B repeat units follow at residues 295–337 (RNLY…DPIA), 338–381 (GKLF…DLVN), and 382–425 (KLVY…FEDY). An N-linked (GlcNAc...) asparagine glycan is attached at Asn-443. The EGF-like 3 domain maps to 471 to 517 (RSHACEVDPYGMPGGCSHICLLSSSYKTRTCRCRTGFNLGSDGRSCK). 4 LDL-receptor class B repeats span residues 568–610 (NYIY…DWIG), 611–656 (NNLY…DPVN), 657–706 (GWMY…DFHT), and 707–750 (NTLY…HGNY). N-linked (GlcNAc...) asparagine glycans are attached at residues Asn-725 and Asn-758. The 41-residue stretch at 794 to 834 (GDNMCRVNNGGCSTLCLAIPGGRVCACADNQLLDENGTTCT) folds into the EGF-like 4 domain. 6 disulfide bridges follow: Cys-798/Cys-809, Cys-805/Cys-818, Cys-820/Cys-833, Cys-845/Cys-857, Cys-852/Cys-870, and Cys-864/Cys-881. Asn-829 carries an N-linked (GlcNAc...) asparagine glycan. The LDL-receptor class A 3 domain occupies 844 to 882 (ICKAGEFRCKNRHCIQARWKCDGDDDCLDGSDEDSVNCF). Residue Asn-883 is glycosylated (N-linked (GlcNAc...) asparagine). 7 LDL-receptor class A domains span residues 885–923 (SCPDDQFKCQNNRCIPKRWLCDGANDCGSNEDESNQTCT), 926–963 (TCQVDQFSCGNGRCIPRAWLCDREDDCGDQTDEMASCE), 966–1003 (TCEPLTQFVCKSGRCISSKWHCDSDDDCGDGSDEVGCV), 1005–1043 (SCFDNQFRCSSGRCIPGHWACDGDNDCGDFSDEAQINCT), 1052–1089 (GCNGNEFQCHPDGNCVPDLWRCDGEKDCEDGSDEKGCN), 1094–1132 (LCDHKTKFSCWSTGRCINKAWVCDGDIDCEDQSDEDDCD), and 1135–1174 (LCGPPKHPCANDTSVCLQPEKLCNGKKDCPDGSDEGYLCD). 15 cysteine pairs are disulfide-bonded: Cys-886-Cys-898, Cys-893-Cys-911, Cys-905-Cys-922, Cys-927-Cys-939, Cys-934-Cys-952, Cys-946-Cys-962, Cys-967-Cys-980, Cys-975-Cys-993, Cys-987-Cys-1002, Cys-1006-Cys-1018, Cys-1013-Cys-1031, Cys-1025-Cys-1042, Cys-1053-Cys-1066, Cys-1060-Cys-1079, and Cys-1073-Cys-1088. Residue Asn-919 is glycosylated (N-linked (GlcNAc...) asparagine). The N-linked (GlcNAc...) asparagine glycan is linked to Asn-1041. Residue Asn-1089 is glycosylated (N-linked (GlcNAc...) asparagine). 6 disulfides stabilise this stretch: Cys-1095/Cys-1109, Cys-1103/Cys-1122, Cys-1116/Cys-1131, Cys-1136/Cys-1150, Cys-1143/Cys-1163, and Cys-1157/Cys-1173. N-linked (GlcNAc...) asparagine glycosylation occurs at Asn-1145. EGF-like domains lie at 1174–1213 (DECSLNNGGCSNHCSVVPGRGIVCSCPEGLQLNKDNKTCE) and 1214–1253 (IVDYCSNHLKCSQVCEQHKHTVKCSCYEGWKLDVDGESCT). N-linked (GlcNAc...) asparagine glycosylation occurs at Asn-1209. Asn-1298 carries an N-linked (GlcNAc...) asparagine glycan. LDL-receptor class B repeat units follow at residues 1300–1346 (SLLY…DWIA), 1347–1389 (GNIY…DPRY), 1390–1436 (GILF…DHFE), 1437–1480 (KRIV…LYGS), and 1481–1522 (EVYW…YHPS). 3 N-linked (GlcNAc...) asparagine glycosylation sites follow: Asn-1502, Asn-1549, and Asn-1636. The region spanning 1527–1570 (APNPCAANDGKGPCSHMCLINHNRSAACACPHLMKLSSDKKTCY) is the EGF-like 7 domain. 4 LDL-receptor class B repeats span residues 1618-1660 (ERLY…DWVS), 1661-1704 (RNLY…HPVR), 1705-1744 (GKLYWTDGNTINMANMDGSNSKILFQNQKEPVGLSIDYVE), and 1745-1787 (NKLY…TIMD). Residues Asn-1754 and Asn-1816 are each glycosylated (N-linked (GlcNAc...) asparagine). An EGF-like 8 domain is found at 1834-1875 (GSNSCQLNNGGCSQLCLPTSETTRTCMCTVGYYLQKNRMSCQ). 3 disulfides stabilise this stretch: Cys-1838-Cys-1849, Cys-1845-Cys-1859, and Cys-1861-Cys-1874. The N-linked (GlcNAc...) asparagine glycan is linked to Asn-1921. 4 LDL-receptor class B repeats span residues 1922–1964 (DTIY…DWIA), 1965–2007 (GNIY…HPEK), 2008–2051 (GLLF…DYEE), and 2052–2095 (NKLY…FGAY). The N-linked (GlcNAc...) asparagine glycan is linked to Asn-1983. N-linked (GlcNAc...) asparagine glycosylation is present at Asn-2105. Residues 2143–2183 (GTNVCARDNGGCKQLCLYRGNSRRTCACAHGYLAEDGVTCL) enclose the EGF-like 9 domain. 3 disulfides stabilise this stretch: Cys-2147-Cys-2158, Cys-2154-Cys-2168, and Cys-2170-Cys-2182. LDL-receptor class B repeat units follow at residues 2239–2280 (NRIF…HRAW), 2281–2329 (DTLY…DECQ), 2330–2374 (NLMF…DYRA), 2375–2416 (EKLY…VYDN), and 2417–2459 (YIFW…VAND). Asn-2458, Asn-2488, and Asn-2507 each carry an N-linked (GlcNAc...) asparagine glycan. In terms of domain architecture, EGF-like 10 spans 2464–2504 (ELSPCALLNGGCHDLCLLTPNGRVNCSCRGDRILLEDNRCV). Residues 2509–2548 (SCNAYSEFECGNGECIDYQLTCDGIPHCKDKSDEKLLYCE) form the LDL-receptor class A 11 domain. 3 cysteine pairs are disulfide-bonded: Cys-2510/Cys-2523, Cys-2518/Cys-2536, and Cys-2530/Cys-2547. Asn-2549 carries N-linked (GlcNAc...) asparagine glycosylation. LDL-receptor class A domains lie at 2551–2587 (SCRRGFKPCYNRRCIPHGKLCDGENDCGDNSDELDCK), 2590–2626 (TCATVEFRCADGTCIPRSARCNQNIDCADASDEKNCN), 2629–2675 (DCTH…LKCP), 2681–2717 (KCEENYFSCPSGRCILNTWICDGQKDCEDGRDEFHCD), 2719–2757 (SCSWNQFACSAQKCISKHWICDGEDDCGDGLDESDSICG), and 2760–2800 (TCAA…AGCA). Disulfide bonds link Cys-2552/Cys-2564, Cys-2559/Cys-2577, Cys-2571/Cys-2586, Cys-2591/Cys-2603, Cys-2598/Cys-2616, and Cys-2610/Cys-2625. N-linked (GlcNAc...) asparagine glycosylation is found at Asn-2626 and Asn-2647. 12 cysteine pairs are disulfide-bonded: Cys-2630–Cys-2652, Cys-2646–Cys-2665, Cys-2659–Cys-2674, Cys-2682–Cys-2694, Cys-2689–Cys-2707, Cys-2701–Cys-2716, Cys-2720–Cys-2732, Cys-2727–Cys-2745, Cys-2739–Cys-2756, Cys-2761–Cys-2774, Cys-2768–Cys-2787, and Cys-2781–Cys-2799. Asn-2802 is a glycosylation site (N-linked (GlcNAc...) asparagine). LDL-receptor class A domains are found at residues 2804-2841 (TCDENAFMCHNKVCIPKQFVCDHDDDCGDGSDESPQCG), 2844-2885 (QCGT…PKCK), and 2890-2926 (SCNSSFFMCKNGRCIPSGGLCDNKDDCGDGSDERNCH). 15 disulfides stabilise this stretch: Cys-2805–Cys-2817, Cys-2812–Cys-2830, Cys-2824–Cys-2840, Cys-2845–Cys-2857, Cys-2852–Cys-2871, Cys-2865–Cys-2884, Cys-2891–Cys-2903, Cys-2898–Cys-2916, Cys-2910–Cys-2925, Cys-2930–Cys-2942, Cys-2938–Cys-2951, Cys-2953–Cys-2966, Cys-2972–Cys-2982, Cys-2978–Cys-2991, and Cys-2993–Cys-3007. N-linked (GlcNAc...) asparagine glycosylation is present at Asn-2892. The 41-residue stretch at 2927–2967 (INECLSKKVSGCSQDCQDLPVSYKCKCWPGFQLKDDGKTCV) folds into the EGF-like 11 domain. The EGF-like 12; calcium-binding domain occupies 2968-3008 (DIDECSSGFPCSQQCINTYGTYKCLCTDGYEIQPDNPNGCK). N-linked (GlcNAc...) asparagine glycosylation is found at Asn-3034, Asn-3066, and Asn-3076. LDL-receptor class B repeat units follow at residues 3055 to 3098 (EFIY…DWIG), 3099 to 3141 (KNLY…DPQA), 3142 to 3185 (GYLY…DYVN), 3186 to 3224 (RRLYWADENHIEFSNMDGSHRHKVPNQDIPGVIALTLFE), and 3225 to 3268 (DYIY…HSYR). An N-linked (GlcNAc...) asparagine glycan is attached at Asn-3164. Positions 3273 to 3314 (SKHLCMINNGGCSHLCLLAPGKTHTCACPTNFYLAADNRTCL) constitute an EGF-like 13 domain. N-linked (GlcNAc...) asparagine glycosylation is found at Asn-3310 and Asn-3316. 12 consecutive LDL-receptor class A domains span residues 3316-3353 (NCTASQFRCKTDKCIPFWWKCDTVDDCGDGSDEPDDCP), 3356-3392 (RCQPGRFQCGTGLCALPAFICDGENDCGDNSDELNCD), 3395-3432 (VCLSGQFKCTKNQKCIPVNLRCNGQDDCGDEEDERDCP), 3435-3472 (SCSPDYFQCKTTKHCISKLWVCDEDPDCADASDEANCD), 3475-3511 (TCGPHEFQCKNNNCIPDHWRCDSQNDCSDNSDEENCK), 3514-3550 (TCTLKDFLCANGDCVSSRFWCDGDFDCADGSDERNCE), 3552-3588 (SCSKDQFRCSNGQCIPAKWKCDGHEDCKYGEDEKSCE), 3593-3629 (TCSSREYICASDGCISASLKCNGEYDCADGSDEMDCV), 3631-3668 (ECKEDQFRCKNKAHCIPIRWLCDGIHDCVDGSDEENCE), 3673-3711 (ICRADEFLCNNSLCKLHFWVCDGEDDCGDNSDEAPDMCV), 3714-3752 (LCPSTRPHRCRNNRICLQSEQMCNGIDECGDNSDEDHCG), and 3761-3797 (PCKKDEFACSNKKCIPMDLQCDRLDDCGDGSDEQGCR). 42 disulfide bridges follow: Cys-3317-Cys-3329, Cys-3324-Cys-3342, Cys-3336-Cys-3352, Cys-3357-Cys-3369, Cys-3364-Cys-3382, Cys-3376-Cys-3391, Cys-3396-Cys-3409, Cys-3403-Cys-3422, Cys-3416-Cys-3431, Cys-3436-Cys-3449, Cys-3443-Cys-3462, Cys-3456-Cys-3471, Cys-3476-Cys-3488, Cys-3483-Cys-3501, Cys-3495-Cys-3510, Cys-3515-Cys-3527, Cys-3522-Cys-3540, Cys-3534-Cys-3549, Cys-3553-Cys-3565, Cys-3560-Cys-3578, Cys-3572-Cys-3587, Cys-3594-Cys-3606, Cys-3601-Cys-3619, Cys-3613-Cys-3628, Cys-3632-Cys-3645, Cys-3639-Cys-3658, Cys-3652-Cys-3667, Cys-3674-Cys-3686, Cys-3681-Cys-3699, Cys-3693-Cys-3710, Cys-3715-Cys-3729, Cys-3723-Cys-3742, Cys-3736-Cys-3751, Cys-3762-Cys-3774, Cys-3769-Cys-3787, Cys-3781-Cys-3796, Cys-3805-Cys-3818, Cys-3812-Cys-3827, Cys-3829-Cys-3842, Cys-3848-Cys-3858, Cys-3854-Cys-3867, and Cys-3869-Cys-3880. Residue Asn-3682 is glycosylated (N-linked (GlcNAc...) asparagine). EGF-like domains lie at 3801–3843 (TEYT…RQCE) and 3844–3881 (DLNECLVFGTCSHQCINVEGSYKCVCDQNFQERNNTCI). Asn-3877, Asn-3894, and Asn-3906 each carry an N-linked (GlcNAc...) asparagine glycan. LDL-receptor class B repeat units follow at residues 3933–3980 (DMII…DWVA), 3981–4038 (GNIY…NPKR), 4039–4082 (GMMY…DYFS), and 4083–4127 (ERIY…FEDY). An N-linked (GlcNAc...) asparagine glycan is attached at Asn-4017. EGF-like domains are found at residues 4171 to 4208 (DLPNPCLDLACEFLCLLNPSGATCVCPEGKYLINGTCN), 4213 to 4249 (LDDSCKLTCENGGRCILNEKGDLRCHCWPSYSGERCE), 4249 to 4285 (EVNHCSNYCQNGGTCVPSVLGRPTCSCALGFTGPNCG), 4285 to 4321 (GKTVCEDFCQNGGTCIVTAGNQPYCHCQPEYTGDRCQ), 4321 to 4357 (QYYVCHHYCVNSESCTIGDDGSVECVCPTRYEGPKCE), 4357 to 4392 (EVDKCVRCHGGHCIINKDSEDIFCNCTNGKIASSCQ), and 4390 to 4427 (SCQLCDGYCYNGGTCQLDPETNVPVCLCSTNWSGTQCE). Residue Asn-4204 is glycosylated (N-linked (GlcNAc...) asparagine). 11 disulfides stabilise this stretch: Cys-4217–Cys-4227, Cys-4221–Cys-4237, Cys-4253–Cys-4263, Cys-4257–Cys-4273, Cys-4275–Cys-4284, Cys-4289–Cys-4299, Cys-4293–Cys-4309, Cys-4311–Cys-4320, Cys-4325–Cys-4335, Cys-4329–Cys-4345, and Cys-4347–Cys-4356. Asn-4381 carries an N-linked (GlcNAc...) asparagine glycan. Intrachain disulfides connect Cys-4394/Cys-4404, Cys-4398/Cys-4415, and Cys-4417/Cys-4426. N-linked (GlcNAc...) asparagine glycosylation occurs at Asn-4420. Residues 4445–4467 (AIIVPLVLLVTLITTLVIGLVLC) traverse the membrane as a helical segment. Over 4468–4599 (KRKRRTKTIR…IEIGIRETVA (132 aa)) the chain is Cytoplasmic. 2 consecutive short sequence motifs (endocytosis signal) follow at residues 4492–4495 (NPSY) and 4559–4562 (NPVY).

The protein belongs to the LDLR family. As to quaternary structure, binds LRPAP1, PLAU, PLAT and SERPINE1; binding is followed by internalization and degradation of the ligands. Expressed in thyroid gland and in salivary gland, as well as in adult and fetal brain.

Its subcellular location is the membrane. Potential cell surface proteins that bind and internalize ligands in the process of receptor-mediated endocytosis. The chain is Low-density lipoprotein receptor-related protein 1B (LRP1B) from Homo sapiens (Human).